A 156-amino-acid chain; its full sequence is 3-hydroxyacyl-[acyl-carrier-protein] dehydratase FabZ (156 aa).

His61 is a catalytic residue.

The protein belongs to the thioester dehydratase family. FabZ subfamily.

It localises to the cytoplasm. The catalysed reaction is a (3R)-hydroxyacyl-[ACP] = a (2E)-enoyl-[ACP] + H2O. Involved in unsaturated fatty acids biosynthesis. Catalyzes the dehydration of short chain beta-hydroxyacyl-ACPs and long chain saturated and unsaturated beta-hydroxyacyl-ACPs. In Acaryochloris marina (strain MBIC 11017), this protein is 3-hydroxyacyl-[acyl-carrier-protein] dehydratase FabZ.